A 221-amino-acid chain; its full sequence is 2-C-methyl-D-erythritol 4-phosphate cytidylyltransferase (221 aa).

Belongs to the IspD/TarI cytidylyltransferase family. IspD subfamily.

The catalysed reaction is 2-C-methyl-D-erythritol 4-phosphate + CTP + H(+) = 4-CDP-2-C-methyl-D-erythritol + diphosphate. It functions in the pathway isoprenoid biosynthesis; isopentenyl diphosphate biosynthesis via DXP pathway; isopentenyl diphosphate from 1-deoxy-D-xylulose 5-phosphate: step 2/6. Its function is as follows. Catalyzes the formation of 4-diphosphocytidyl-2-C-methyl-D-erythritol from CTP and 2-C-methyl-D-erythritol 4-phosphate (MEP). This chain is 2-C-methyl-D-erythritol 4-phosphate cytidylyltransferase, found in Roseobacter denitrificans (strain ATCC 33942 / OCh 114) (Erythrobacter sp. (strain OCh 114)).